A 613-amino-acid polypeptide reads, in one-letter code: Phostensin (613 aa).

Basic and acidic residues predominate over residues 15 to 33 (RRQEEASVRGREKAERERL). Disordered regions lie at residues 15–231 (RRQE…SAYQ) and 266–505 (GEER…GKKR). 5 positions are modified to phosphoserine: Ser-54, Ser-125, Ser-133, Ser-175, and Ser-195. Basic and acidic residues-rich tracts occupy residues 104–154 (RSEE…ERRL) and 167–191 (LEAR…EPWK). Thr-199 carries the phosphothreonine modification. Basic and acidic residues predominate over residues 199-221 (TPERSLRLAESREQSPRRKEVES). Ser-224 carries the post-translational modification Phosphoserine. The span at 266–282 (GEERQGYSEKCGRKEEW) shows a compositional bias: basic and acidic residues. A compositionally biased stretch (polar residues) spans 301 to 310 (REAQGSSSTG). Basic and acidic residues-rich tracts occupy residues 314 to 327 (AEQR…RGMK), 340 to 350 (KAREWTPRDIE), and 357 to 367 (EPSESAEKRLE). Ser-368 and Ser-432 each carry phosphoserine. The span at 424–446 (QPPPPAPLSPPPPAPTAPQPPGD) shows a compositional bias: pro residues. At Lys-457 the chain carries N6-acetyllysine. The segment covering 476–499 (PRRSVPPTTPATPTSPATADAAVP) has biased composition (low complexity). Phosphoserine occurs at positions 490 and 530. The tract at residues 552–594 (QYPSESSVLEELGPEPEVPSAPNPPAAQPDDEEDEEELLLLQP) is disordered. Residues 567–578 (PEVPSAPNPPAA) show a composition bias toward pro residues. Residues 580-589 (PDDEEDEEEL) show a composition bias toward acidic residues.

Interacts with Protein phosphatase 1 (PP1).

The protein resides in the cytoplasm. It is found in the cytoskeleton. Its function is as follows. May target protein phosphatase 1 to F-actin cytoskeleton. This Macaca mulatta (Rhesus macaque) protein is Phostensin (PPP1R18).